Reading from the N-terminus, the 399-residue chain is L-asparaginase-like protein GG20738 (399 aa).

The signal sequence occupies residues Met-1–Ser-22. 3 cysteine pairs are disulfide-bonded: Cys-90–Cys-95, Cys-189–Cys-205, and Cys-344–Cys-371.

The protein belongs to the Ntn-hydrolase family.

The protein is L-asparaginase-like protein GG20738 of Drosophila erecta (Fruit fly).